The following is a 1208-amino-acid chain: Chromosome partition protein Smc (1208 aa).

Residue 32–39 (PNGCGKSN) participates in ATP binding. Coiled coils occupy residues 170–205 (VTKY…GERI), 239–504 (EARA…ARVQ), and 694–1054 (VIER…QLQD).

The protein belongs to the SMC family. As to quaternary structure, homodimer.

The protein localises to the cytoplasm. Its function is as follows. Required for chromosome condensation and partitioning. This chain is Chromosome partition protein Smc, found in Thauera aminoaromatica.